Here is a 262-residue protein sequence, read N- to C-terminus: Taurine import ATP-binding protein TauB (262 aa).

Residues 4 to 234 (VDHASVFFAA…RFAETGDARS (231 aa)) enclose the ABC transporter domain. Position 39–46 (39–46 (GASGCGKS)) interacts with ATP.

It belongs to the ABC transporter superfamily. Taurine importer (TC 3.A.1.17.1) family. In terms of assembly, the complex is composed of two ATP-binding proteins (TauB), two transmembrane proteins (TauC) and a solute-binding protein (TauA).

The protein localises to the cell inner membrane. It catalyses the reaction taurine(out) + ATP + H2O = taurine(in) + ADP + phosphate + H(+). Part of the ABC transporter complex TauABC involved in taurine import. Responsible for energy coupling to the transport system. This Rhizobium johnstonii (strain DSM 114642 / LMG 32736 / 3841) (Rhizobium leguminosarum bv. viciae) protein is Taurine import ATP-binding protein TauB.